The primary structure comprises 67 residues: Alpha-toxin Tf3 (67 aa).

The LCN-type CS-alpha/beta domain maps to 2–63 (KDGYPVEGDN…EPTKTNGRCK (62 aa)). Intrachain disulfides connect C12–C62, C16–C38, C24–C45, and C28–C47. P64 is subject to Proline amide.

It belongs to the long (4 C-C) scorpion toxin superfamily. Sodium channel inhibitor family. Alpha subfamily. Expressed by the venom gland.

It is found in the secreted. Its function is as follows. Alpha toxins bind voltage-independently at site-3 of sodium channels (Nav) and inhibit the inactivation of the activated channels, thereby blocking neuronal transmission. The chain is Alpha-toxin Tf3 from Tityus fasciolatus (Central Brazilian scorpion).